A 578-amino-acid chain; its full sequence is Probable lysosomal cobalamin transporter (578 aa).

Helical transmembrane passes span 8-28 (LIWV…SVFI) and 46-66 (IFAI…VALV). An N-linked (GlcNAc...) asparagine glycan is attached at N70. The next 2 membrane-spanning stretches (helical) occupy residues 95-115 (VVYY…IPFT) and 145-165 (TITF…VPVA). N168 is a glycosylation site (N-linked (GlcNAc...) asparagine). 6 consecutive transmembrane segments (helical) span residues 188 to 208 (ALTF…VLYT), 312 to 332 (LLGG…MLLT), 347 to 367 (GYIL…VQAA), 375 to 395 (VIFT…IAIV), 419 to 439 (LTTA…SMVV), and 506 to 526 (FFGV…LIVV). Positions 539–578 (RQMDEDAEEAEEEGLLASTGRRLDTAWQDITGRSNRQRDS) are disordered. Residues 540 to 552 (QMDEDAEEAEEEG) show a composition bias toward acidic residues.

The protein belongs to the LIMR family. LMBRD1 subfamily.

The protein resides in the lysosome membrane. In terms of biological role, probable lysosomal cobalamin transporter. Required to export cobalamin from lysosomes allowing its conversion to cofactors. The polypeptide is Probable lysosomal cobalamin transporter (Aspergillus terreus (strain NIH 2624 / FGSC A1156)).